The chain runs to 166 residues: Specificity protein transcription factor 2 (166 aa).

Positions 17–45 (SYHHSLPSISPPDSPASTSASSSSSSIGA) are disordered. The segment covering 31–42 (PASTSASSSSSS) has biased composition (low complexity). 3 C2H2-type zinc fingers span residues 77–101 (HLCSVPGCGKTYKKTSHLRAHLRKH), 107–131 (FVCDWFDCGKRFDRSDQLIRHKRTH), and 137–160 (FACKFCIRQFSRSDHLQQHLTSVH).

It belongs to the Sp1 C2H2-type zinc-finger protein family.

In terms of biological role, transcription factor. Probably acts downstream of the Wnt signaling pathway. In Caenorhabditis elegans, this protein is Specificity protein transcription factor 2.